A 226-amino-acid chain; its full sequence is Protein DVU_0532 (226 aa).

Helical transmembrane passes span 1–23 (MYAF…GLLA), 46–57 (AIGLQGAVQSAL), 73–99 (FFTV…NVIL), 112–131 (MGVA…MIAL), 141–164 (ILTT…GFLA), and 194–222 (LSHI…TRGP).

Heme b serves as cofactor.

The protein localises to the cell membrane. Functionally, HMWC (high-molecular-weight cytochrome c), ORF2, ORF3, ORF4, ORF5 and ORF6 in the HMC operon form a transmembrane protein complex that allows electron flow from the periplasmic hydrogenase to the cytoplasmic enzymes that catalyze reduction of sulfates. The sequence is that of Protein DVU_0532 from Nitratidesulfovibrio vulgaris (strain ATCC 29579 / DSM 644 / CCUG 34227 / NCIMB 8303 / VKM B-1760 / Hildenborough) (Desulfovibrio vulgaris).